Consider the following 387-residue polypeptide: Patatin-08 (387 aa).

Positions M1–A23 are cleaved as a signal peptide. A PNPLA domain is found at L32–I230. Residues G36–G41 carry the GXGXXG motif. Residues G75–G79 carry the GXSXG motif. Catalysis depends on S77, which acts as the Nucleophile. N115 carries N-linked (GlcNAc...) asparagine glycosylation. Catalysis depends on D216, which acts as the Proton acceptor. The short motif at D216–A218 is the DGA/G element. Residues E361 to A385 adopt a coiled-coil conformation.

Belongs to the patatin family. As to expression, tuber.

The protein localises to the vacuole. Functionally, probable lipolytic acyl hydrolase (LAH), an activity which is thought to be involved in the response of tubers to pathogens. The protein is Patatin-08 of Solanum tuberosum (Potato).